The primary structure comprises 207 residues: Superoxide dismutase [Mn] (207 aa).

Histidine 28, histidine 76, aspartate 160, and histidine 164 together coordinate Mn(2+).

It belongs to the iron/manganese superoxide dismutase family. The cofactor is Mn(2+).

It localises to the secreted. It catalyses the reaction 2 superoxide + 2 H(+) = H2O2 + O2. Its function is as follows. Destroys superoxide anion radicals which are normally produced within the cells and which are toxic to biological systems. This chain is Superoxide dismutase [Mn] (sodA), found in Mycolicibacterium paratuberculosis (strain ATCC BAA-968 / K-10) (Mycobacterium paratuberculosis).